The following is a 154-amino-acid chain: Deoxyuridine 5'-triphosphate nucleotidohydrolase (154 aa).

Substrate contacts are provided by residues 72–74, N85, 89–91, and M99; these read RSG and LID.

It belongs to the dUTPase family. It depends on Mg(2+) as a cofactor.

The catalysed reaction is dUTP + H2O = dUMP + diphosphate + H(+). It functions in the pathway pyrimidine metabolism; dUMP biosynthesis; dUMP from dCTP (dUTP route): step 2/2. In terms of biological role, this enzyme is involved in nucleotide metabolism: it produces dUMP, the immediate precursor of thymidine nucleotides and it decreases the intracellular concentration of dUTP so that uracil cannot be incorporated into DNA. This chain is Deoxyuridine 5'-triphosphate nucleotidohydrolase, found in Psychrobacter cryohalolentis (strain ATCC BAA-1226 / DSM 17306 / VKM B-2378 / K5).